Here is a 53-residue protein sequence, read N- to C-terminus: MPQMAPISWLLLFIVFSITFILFCSINYYSYMPTSPKSNELKNINLNSMNWKW.

A helical transmembrane segment spans residues 4 to 24 (MAPISWLLLFIVFSITFILFC).

This sequence belongs to the ATPase protein 8 family. As to quaternary structure, F-type ATPases have 2 components, CF(1) - the catalytic core - and CF(0) - the membrane proton channel.

Its subcellular location is the mitochondrion membrane. Functionally, mitochondrial membrane ATP synthase (F(1)F(0) ATP synthase or Complex V) produces ATP from ADP in the presence of a proton gradient across the membrane which is generated by electron transport complexes of the respiratory chain. F-type ATPases consist of two structural domains, F(1) - containing the extramembraneous catalytic core and F(0) - containing the membrane proton channel, linked together by a central stalk and a peripheral stalk. During catalysis, ATP synthesis in the catalytic domain of F(1) is coupled via a rotary mechanism of the central stalk subunits to proton translocation. Part of the complex F(0) domain. Minor subunit located with subunit a in the membrane. The polypeptide is ATP synthase protein 8 (mt:ATPase8) (Drosophila yakuba (Fruit fly)).